Consider the following 223-residue polypeptide: Serum amyloid P-component (223 aa).

Positions 1-19 (MNKPLLWISVLTSLLEAFA) are cleaved as a signal peptide. In terms of domain architecture, Pentraxin (PTX) spans 24–223 (SGKVFVFPRE…YVIIKPLVWV (200 aa)). Asparagine 51 carries N-linked (GlcNAc...) asparagine glycosylation. An intrachain disulfide couples cysteine 55 to cysteine 114. Residues aspartate 77, asparagine 78, glutamate 155, glutamine 156, aspartate 157, and glutamine 167 each contribute to the Ca(2+) site.

The protein belongs to the pentraxin family. In terms of assembly, homopentamer. Pentraxin (or pentaxin) have a discoid arrangement of 5 non-covalently bound subunits. Ca(2+) serves as cofactor. N-glycosylated with a complex biantennary oligosaccharide chain with a sialic acid at the end (disialo-SAP). Monosialo-SAP as well as asioalo-SAP are also detected. As to expression, found in serum and urine.

The protein localises to the secreted. In terms of biological role, can interact with DNA and histones and may scavenge nuclear material released from damaged circulating cells. May also function as a calcium-dependent lectin. The polypeptide is Serum amyloid P-component (APCS) (Homo sapiens (Human)).